The chain runs to 594 residues: Sucrose transport protein SUC3 (594 aa).

Ser2 bears the N-acetylserine mark. At 2–58 (SDSVSISVPYRNLRKEIELETVTKHRQNESGSSSFSESASPSNHSDSADGESVSKNC) the chain is on the cytoplasmic side. Residues 23-50 (VTKHRQNESGSSSFSESASPSNHSDSAD) form a disordered region. Residues 31-46 (SGSSSFSESASPSNHS) show a composition bias toward low complexity. A helical transmembrane segment spans residues 59–79 (SLVTLVLSCTVAAGVQFGWAL). Residues 80–98 (QLSLLTPYIQTLGISHAFS) are Extracellular-facing. Residues 99–119 (SFIWLCGPITGLVVQPFVGIW) form a helical membrane-spanning segment. The Cytoplasmic segment spans residues 120–131 (SDKCTSKYGRRR). Residues 132 to 152 (PFILVGSFMISIAVIIIGFSA) traverse the membrane as a helical segment. At 153 to 174 (DIGYLLGDSKEHCSTFKGTRTR) the chain is on the extracellular side. The chain crosses the membrane as a helical span at residues 175 to 195 (AAVVFIIGFWLLDLANNTVQG). Over 196–214 (PARALLADLSGPDQRNTAN) the chain is Cytoplasmic. The chain crosses the membrane as a helical span at residues 215-235 (AVFCLWMAIGNILGFSAGASG). At 236–257 (KWQEWFPFLTSRACCAACGNLK) the chain is on the extracellular side. Residues 258-278 (AAFLLAVVFLTICTLVTIYFA) form a helical membrane-spanning segment. The Cytoplasmic segment spans residues 279-365 (KEIPFTSNKP…LTSLRHLPPA (87 aa)). Residues 366 to 386 (MHSVLIVMALTWLSWFPFFLF) traverse the membrane as a helical segment. The Extracellular segment spans residues 387–417 (DTDWMGREVYHGDPTGDSLHMELYDQGVREG). The helical transmembrane segment at 418 to 438 (ALGLLLNSVVLGISSFLIEPM) threads the bilayer. At 439–445 (CQRMGAR) the chain is on the cytoplasmic side. Residues 446-466 (VVWALSNFTVFACMAGTAVIS) form a helical membrane-spanning segment. The Extracellular portion of the chain corresponds to 467-489 (LMSLSDDKNGIEYIMRGNETTRT). N-linked (GlcNAc...) asparagine glycosylation occurs at Asn484. The chain crosses the membrane as a helical span at residues 490-510 (AAVIVFALLGFPLAITYSVPF). Residues 511–525 (SVTAEVTADSGGGQG) lie on the Cytoplasmic side of the membrane. The helical transmembrane segment at 526 to 546 (LAIGVLNLAIVIPQMIVSLGA) threads the bilayer. At 547-555 (GPWDQLFGG) the chain is on the extracellular side. A helical membrane pass occupies residues 556–576 (GNLPAFVLASVAAFAAGVIAL). At 577–594 (QRLPTLSSSFKSTGFHIG) the chain is on the cytoplasmic side.

This sequence belongs to the glycoside-pentoside-hexuronide (GPH) cation symporter transporter (TC 2.A.2.4) family. In terms of assembly, homodimer. Interacts with SUC2 and SUC4. Mostly localized in parenchymatic cells next to vascular tissues (at protein level). Present in stipules, trichomes, hydathodes and guard cells of source leaves, as well as in lateral root tips and flowers.

Its subcellular location is the cell membrane. The enzyme catalyses sucrose(out) + H(+)(out) = sucrose(in) + H(+)(in). It functions in the pathway glycan biosynthesis; sucrose metabolism. Inhibited by protonophores (e.g. dinitrophenol and carbonyl cyanide m-chlorophenyl-hydrazone (CCCP)) and SH group inhibitors (e.g. p-chloromercuribenzene sulphonic acid (PCMBS)). In terms of biological role, responsible for the transport of sucrose into the cell, with the concomitant uptake of protons (symport system). Can also transport maltose at a lesser rate. May also transport biotin. Probably involved in carpel maturation that leads to pod shatter and seed dispersal. This Arabidopsis thaliana (Mouse-ear cress) protein is Sucrose transport protein SUC3.